We begin with the raw amino-acid sequence, 1339 residues long: Receptor tyrosine-protein kinase erbB-3 (1339 aa).

The signal sequence occupies residues 1-19 (MRATGTLQVLCFLLSLARG). Topologically, residues 20–643 (SEMGNSQAVC…EVLMSKPHLV (624 aa)) are extracellular. N-linked (GlcNAc...) asparagine glycosylation is present at Asn126. 11 cysteine pairs are disulfide-bonded: Cys186–Cys194, Cys190–Cys202, Cys210–Cys218, Cys214–Cys226, Cys227–Cys235, Cys231–Cys243, Cys246–Cys255, Cys259–Cys286, Cys290–Cys301, Cys305–Cys320, and Cys323–Cys327. N-linked (GlcNAc...) asparagine glycosylation occurs at Asn250. N-linked (GlcNAc...) asparagine glycosylation is found at Asn353, Asn408, Asn414, Asn437, and Asn469. 10 cysteine pairs are disulfide-bonded: Cys500-Cys509, Cys504-Cys517, Cys520-Cys529, Cys533-Cys549, Cys552-Cys565, Cys556-Cys573, Cys576-Cys585, Cys589-Cys610, Cys613-Cys621, and Cys617-Cys629. Asn522 is a glycosylation site (N-linked (GlcNAc...) asparagine). The N-linked (GlcNAc...) asparagine glycan is linked to Asn566. N-linked (GlcNAc...) asparagine glycosylation occurs at Asn616. Residues 644-662 (IAVTVGLAVILMILGGSFL) traverse the membrane as a helical segment. The Cytoplasmic portion of the chain corresponds to 663 to 1339 (YWRGRRIQNK…LFPKANAQRT (677 aa)). Ser684 is modified (phosphoserine). Positions 707-964 (LRKLKVLGSG…TFKELANEFT (258 aa)) constitute a Protein kinase domain. ATP contacts are provided by residues 713–721 (LGSGVFGTV), Lys740, 786–788 (QYL), and 832–837 (DLALRN). Asp832 serves as the catalytic Proton acceptor. Phosphoserine is present on Ser980. Low complexity predominate over residues 1023 to 1036 (SLGSALSLPTGTLT). Disordered regions lie at residues 1023–1052 (SLGSALSLPTGTLTRPRGSQSLLSPSSGYM) and 1078–1215 (PISL…GSLE). Positions 1039-1052 (RGSQSLLSPSSGYM) are enriched in polar residues. A compositionally biased stretch (low complexity) spans 1172–1184 (GTLSSVGLSSVLG). Positions 1185–1195 (TEEEDEDEEYE) are enriched in acidic residues.

It belongs to the protein kinase superfamily. Tyr protein kinase family. EGF receptor subfamily. As to quaternary structure, monomer and homodimer. Heterodimer with each of the other ERBB receptors (Potential). Interacts with CSPG5, PA2G4, GRB7, MYOC and MUC1. Found in a ternary complex with NRG1 and ITGAV:ITGB3 or ITGA6:ITGB4. In terms of processing, autophosphorylated. Ligand-binding increases phosphorylation on tyrosine residues and promotes its association with the p85 subunit of phosphatidylinositol 3-kinase.

The protein localises to the membrane. The enzyme catalyses L-tyrosyl-[protein] + ATP = O-phospho-L-tyrosyl-[protein] + ADP + H(+). Tyrosine-protein kinase that plays an essential role as cell surface receptor for neuregulins. Binds to neuregulin-1 (NRG1) and is activated by it; ligand-binding increases phosphorylation on tyrosine residues and promotes its association with the p85 subunit of phosphatidylinositol 3-kinase. May also be activated by CSPG5. Involved in the regulation of myeloid cell differentiation. This chain is Receptor tyrosine-protein kinase erbB-3 (Erbb3), found in Rattus norvegicus (Rat).